We begin with the raw amino-acid sequence, 359 residues long: Protein RecA (359 aa).

Residue 77 to 84 (GPESSGKT) participates in ATP binding.

Belongs to the RecA family.

The protein localises to the cytoplasm. Functionally, can catalyze the hydrolysis of ATP in the presence of single-stranded DNA, the ATP-dependent uptake of single-stranded DNA by duplex DNA, and the ATP-dependent hybridization of homologous single-stranded DNAs. It interacts with LexA causing its activation and leading to its autocatalytic cleavage. This chain is Protein RecA, found in Azospirillum lipoferum (strain 4B).